A 266-amino-acid chain; its full sequence is Glutamate racemase (266 aa).

Substrate contacts are provided by residues 7–8 (DS) and 39–40 (YG). The Proton donor/acceptor role is filled by Cys70. Residue 71 to 72 (NT) coordinates substrate. Catalysis depends on Cys186, which acts as the Proton donor/acceptor. 187–188 (TH) is a binding site for substrate.

This sequence belongs to the aspartate/glutamate racemases family.

The catalysed reaction is L-glutamate = D-glutamate. It functions in the pathway cell wall biogenesis; peptidoglycan biosynthesis. In terms of biological role, provides the (R)-glutamate required for cell wall biosynthesis. This is Glutamate racemase from Campylobacter curvus (strain 525.92).